Consider the following 547-residue polypeptide: Inactive delta-guaiene synthase (547 aa).

The Mg(2+) site is built by aspartate 299, aspartate 303, and aspartate 444. The DDXXD motif signature appears at 299–303 (DDTYD).

This sequence belongs to the terpene synthase family. The cofactor is Mg(2+).

The polypeptide is Inactive delta-guaiene synthase (C1) (Aquilaria crassna (Eagle wood)).